The sequence spans 88 residues: DASH complex subunit HSK3 (88 aa).

Positions 1–15 (MSSRGSGANAASRQS) are enriched in low complexity. A disordered region spans residues 1 to 24 (MSSRGSGANAASRQSMTASGGAVK).

It belongs to the DASH complex HSK3 family. Component of the DASH complex consisting of ASK1, DAD1, DAD2, DAD3, DAD4, DAM1, DUO1, HSK3, SPC19 and SPC34, with a stoichiometry of one copy of each subunit per complex. Multiple DASH complexes oligomerize to form a ring that encircles spindle microtubules and organizes the rod-like NDC80 complexes of the outer kinetochore. DASH complex oligomerization strengthens microtubule attachments. On cytoplasmic microtubules, DASH complexes appear to form patches instead of rings.

The protein localises to the nucleus. Its subcellular location is the cytoplasm. It localises to the cytoskeleton. The protein resides in the spindle. It is found in the chromosome. The protein localises to the centromere. Its subcellular location is the kinetochore. Functionally, component of the DASH complex that connects microtubules with kinetochores and couples microtubule depolymerisation to chromosome movement; it is involved in retrieving kinetochores to the spindle poles before their re-orientation on the spindle in early mitosis and allows microtubule depolymerization to pull chromosomes apart and resist detachment during anaphase. Kinetochores, consisting of a centromere-associated inner segment and a microtubule-contacting outer segment, play a crucial role in chromosome segregation by mediating the physical connection between centromeric DNA and microtubules. Kinetochores also serve as an input point for the spindle assembly checkpoint, which delays anaphase until all chromosomes have bioriented on the mitotic spindle. The protein is DASH complex subunit HSK3 of Chaetomium thermophilum (strain DSM 1495 / CBS 144.50 / IMI 039719) (Thermochaetoides thermophila).